The following is a 298-amino-acid chain: Bifunctional protein FolD (298 aa).

NADP(+)-binding positions include 167-169, Ser-192, and Val-233; that span reads GRS.

This sequence belongs to the tetrahydrofolate dehydrogenase/cyclohydrolase family. As to quaternary structure, homodimer.

The enzyme catalyses (6R)-5,10-methylene-5,6,7,8-tetrahydrofolate + NADP(+) = (6R)-5,10-methenyltetrahydrofolate + NADPH. It catalyses the reaction (6R)-5,10-methenyltetrahydrofolate + H2O = (6R)-10-formyltetrahydrofolate + H(+). It functions in the pathway one-carbon metabolism; tetrahydrofolate interconversion. Its function is as follows. Catalyzes the oxidation of 5,10-methylenetetrahydrofolate to 5,10-methenyltetrahydrofolate and then the hydrolysis of 5,10-methenyltetrahydrofolate to 10-formyltetrahydrofolate. The protein is Bifunctional protein FolD of Chelativorans sp. (strain BNC1).